Reading from the N-terminus, the 154-residue chain is Myoglobin (154 aa).

The 147-residue stretch at 2 to 148 folds into the Globin domain; the sequence is GLSDQEWQQV…FRNDMASKYK (147 aa). H65 contacts nitrite. H65 contributes to the O2 binding site. H94 contributes to the heme b binding site.

It belongs to the globin family. Monomeric.

The protein resides in the cytoplasm. Its subcellular location is the sarcoplasm. The enzyme catalyses Fe(III)-heme b-[protein] + nitric oxide + H2O = Fe(II)-heme b-[protein] + nitrite + 2 H(+). It catalyses the reaction H2O2 + AH2 = A + 2 H2O. In terms of biological role, monomeric heme protein which primary function is to store oxygen and facilitate its diffusion within muscle tissues. Reversibly binds oxygen through a pentacoordinated heme iron and enables its timely and efficient release as needed during periods of heightened demand. Depending on the oxidative conditions of tissues and cells, and in addition to its ability to bind oxygen, it also has a nitrite reductase activity whereby it regulates the production of bioactive nitric oxide. Under stress conditions, like hypoxia and anoxia, it also protects cells against reactive oxygen species thanks to its pseudoperoxidase activity. The polypeptide is Myoglobin (MB) (Cerorhinca monocerata (Rhinoceros auklet)).